Reading from the N-terminus, the 267-residue chain is uncharacterized protein (267 aa).

One can recognise an ABC transporter domain in the interval leucine 2–glycine 198. Glycine 3–threonine 10 is an ATP binding site.

This sequence belongs to the ABC transporter superfamily.

This is an uncharacterized protein from Alkalihalophilus pseudofirmus (strain ATCC BAA-2126 / JCM 17055 / OF4) (Bacillus pseudofirmus).